The primary structure comprises 316 residues: Putative ubiquitin-conjugating enzyme E2 39 (316 aa).

A UBC core domain is found at 57-217 (NWVKDIQKEW…VFVFSLKTMH (161 aa)). Cysteine 143 functions as the Glycyl thioester intermediate in the catalytic mechanism.

This sequence belongs to the ubiquitin-conjugating enzyme family.

It catalyses the reaction S-ubiquitinyl-[E1 ubiquitin-activating enzyme]-L-cysteine + [E2 ubiquitin-conjugating enzyme]-L-cysteine = [E1 ubiquitin-activating enzyme]-L-cysteine + S-ubiquitinyl-[E2 ubiquitin-conjugating enzyme]-L-cysteine.. The protein operates within protein modification; protein ubiquitination. Functionally, accepts the ubiquitin from the E1 complex and catalyzes its covalent attachment to other proteins. In Arabidopsis thaliana (Mouse-ear cress), this protein is Putative ubiquitin-conjugating enzyme E2 39 (UBC39).